The chain runs to 552 residues: Glutamate--tRNA ligase (552 aa).

The short motif at 41 to 51 is the 'HIGH' region element; it reads PSPTGFQHIGG. Positions 293-297 match the 'KMSKS' region motif; it reads KLSKR. Lys-296 contributes to the ATP binding site.

The protein belongs to the class-I aminoacyl-tRNA synthetase family. Glutamate--tRNA ligase type 1 subfamily. Monomer.

The protein resides in the cytoplasm. The catalysed reaction is tRNA(Glu) + L-glutamate + ATP = L-glutamyl-tRNA(Glu) + AMP + diphosphate. Its function is as follows. Catalyzes the attachment of glutamate to tRNA(Glu) in a two-step reaction: glutamate is first activated by ATP to form Glu-AMP and then transferred to the acceptor end of tRNA(Glu). This is Glutamate--tRNA ligase from Clostridium perfringens (strain SM101 / Type A).